The following is a 620-amino-acid chain: 1-deoxy-D-xylulose-5-phosphate synthase (620 aa).

Thiamine diphosphate contacts are provided by residues H75 and 116–118 (AHS). A Mg(2+)-binding site is contributed by D147. Thiamine diphosphate contacts are provided by residues 148 to 149 (GA), N177, Y284, and E366. Residue N177 coordinates Mg(2+).

The protein belongs to the transketolase family. DXPS subfamily. Homodimer. The cofactor is Mg(2+). It depends on thiamine diphosphate as a cofactor.

It carries out the reaction D-glyceraldehyde 3-phosphate + pyruvate + H(+) = 1-deoxy-D-xylulose 5-phosphate + CO2. Its pathway is metabolic intermediate biosynthesis; 1-deoxy-D-xylulose 5-phosphate biosynthesis; 1-deoxy-D-xylulose 5-phosphate from D-glyceraldehyde 3-phosphate and pyruvate: step 1/1. Its function is as follows. Catalyzes the acyloin condensation reaction between C atoms 2 and 3 of pyruvate and glyceraldehyde 3-phosphate to yield 1-deoxy-D-xylulose-5-phosphate (DXP). The polypeptide is 1-deoxy-D-xylulose-5-phosphate synthase (Bordetella bronchiseptica (strain ATCC BAA-588 / NCTC 13252 / RB50) (Alcaligenes bronchisepticus)).